The chain runs to 462 residues: UDP-N-acetylmuramate--L-alanine ligase (462 aa).

Residue 116-122 (GAHGKTT) participates in ATP binding.

Belongs to the MurCDEF family.

The protein localises to the cytoplasm. The enzyme catalyses UDP-N-acetyl-alpha-D-muramate + L-alanine + ATP = UDP-N-acetyl-alpha-D-muramoyl-L-alanine + ADP + phosphate + H(+). Its pathway is cell wall biogenesis; peptidoglycan biosynthesis. Cell wall formation. The polypeptide is UDP-N-acetylmuramate--L-alanine ligase (Desulforamulus reducens (strain ATCC BAA-1160 / DSM 100696 / MI-1) (Desulfotomaculum reducens)).